A 78-amino-acid polypeptide reads, in one-letter code: Small ribosomal subunit protein uS17 (78 aa).

This sequence belongs to the universal ribosomal protein uS17 family. In terms of assembly, part of the 30S ribosomal subunit.

One of the primary rRNA binding proteins, it binds specifically to the 5'-end of 16S ribosomal RNA. The sequence is that of Small ribosomal subunit protein uS17 from Sinorhizobium fredii (strain NBRC 101917 / NGR234).